We begin with the raw amino-acid sequence, 381 residues long: L-lactate dehydrogenase (381 aa).

Positions 1-380 constitute an FMN hydroxy acid dehydrogenase domain; that stretch reads MIISASTDYR…TRDSLVRELG (380 aa). Tyrosine 24 is a binding site for substrate. Residues serine 106 and glutamine 127 each contribute to the FMN site. Tyrosine 129 is a binding site for substrate. FMN is bound at residue threonine 155. Substrate is bound at residue arginine 164. Lysine 251 is a binding site for FMN. Histidine 275 serves as the catalytic Proton acceptor. Arginine 278 contributes to the substrate binding site. Position 306-330 (306-330) interacts with FMN; that stretch reads DSGIRSGLDVVRMIALGADTVLIGR.

It belongs to the FMN-dependent alpha-hydroxy acid dehydrogenase family. In terms of assembly, homotetramer. The cofactor is FMN.

Its subcellular location is the cell inner membrane. It carries out the reaction (S)-lactate + A = pyruvate + AH2. Functionally, catalyzes the conversion of L-lactate to pyruvate. Is coupled to the respiratory chain. This Pseudomonas putida (strain ATCC 700007 / DSM 6899 / JCM 31910 / BCRC 17059 / LMG 24140 / F1) protein is L-lactate dehydrogenase.